Reading from the N-terminus, the 119-residue chain is Ribonuclease P protein component (119 aa).

This sequence belongs to the RnpA family. Consists of a catalytic RNA component (M1 or rnpB) and a protein subunit.

The catalysed reaction is Endonucleolytic cleavage of RNA, removing 5'-extranucleotides from tRNA precursor.. RNaseP catalyzes the removal of the 5'-leader sequence from pre-tRNA to produce the mature 5'-terminus. It can also cleave other RNA substrates such as 4.5S RNA. The protein component plays an auxiliary but essential role in vivo by binding to the 5'-leader sequence and broadening the substrate specificity of the ribozyme. In Bacillus cereus (strain ZK / E33L), this protein is Ribonuclease P protein component.